The following is a 328-amino-acid chain: Testis-specific serine/threonine-protein kinase 4 (328 aa).

The region spanning 25 to 293 (YEVGKAIGHG…ILDIIKDSWV (269 aa)) is the Protein kinase domain. ATP-binding positions include 31–39 (IGHGSYGSV) and Lys-54. Residue Asp-148 is the Proton acceptor of the active site. Thr-197 bears the Phosphothreonine mark.

It belongs to the protein kinase superfamily. CAMK Ser/Thr protein kinase family. In terms of assembly, homodimer. Interacts with HSP90; this interaction stabilizes and activates TSSK4. Interacts with ODF2 (via C-terminus); this interaction promotes ODF2 phosphorylation on 'Ser-95'. May interact with CREM. Interacts with CREB1; this interaction facilitates phosphorylation on 'Ser-133'. Interacts with QRICH2. Requires Mg(2+) as cofactor. Activated by autophosphorylation on Thr-197. ODF2 potentiates the autophosphorylation activity of TSSK4 at Thr-197. Post-translationally, ubiquitinated; HSP90 activity negatively regulates ubiquitination and degradation. As to expression, expressed only in the testis.

The protein localises to the cytoplasmic vesicle. It is found in the secretory vesicle. Its subcellular location is the acrosome. It localises to the cell projection. The protein resides in the cilium. The protein localises to the flagellum. It catalyses the reaction L-seryl-[protein] + ATP = O-phospho-L-seryl-[protein] + ADP + H(+). It carries out the reaction L-threonyl-[protein] + ATP = O-phospho-L-threonyl-[protein] + ADP + H(+). Its activity is regulated as follows. Activated by phosphorylation on Thr-197. In terms of biological role, serine/threonine kinase which is involved in male germ cell development and in mature sperm function. May be involved in the Cre/Creb signaling pathway. Phosphorylates CREB1 on 'Ser-133' in vitro and can stimulate Cre/Creb pathway in cells. Phosphorylates CREM on 'Ser-116' in vitro. Phosphorylates ODF2 on 'Ser-95'. The sequence is that of Testis-specific serine/threonine-protein kinase 4 from Homo sapiens (Human).